The primary structure comprises 148 residues: C-C motif chemokine 2 (148 aa).

The N-terminal stretch at Met1 to Ala23 is a signal peptide. Gln24 carries the pyrrolidone carboxylic acid modification. Intrachain disulfides connect Cys34-Cys59 and Cys35-Cys75. A glycan (N-linked (GlcNAc...) asparagine) is linked at Asn126.

It belongs to the intercrine beta (chemokine CC) family. As to quaternary structure, monomer or homodimer; in equilibrium. Is tethered on endothelial cells by glycosaminoglycan (GAG) side chains of proteoglycans. Interacts with TNFAIP6 (via Link domain). In terms of processing, processing at the N-terminus can regulate receptor and target cell selectivity. Deletion of the N-terminal residue converts it from an activator of basophil to an eosinophil chemoattractant. N-Glycosylated.

It localises to the secreted. In terms of biological role, acts as a ligand for C-C chemokine receptor CCR2. Signals through binding and activation of CCR2 and induces a strong chemotactic response and mobilization of intracellular calcium ions. Exhibits a chemotactic activity for monocytes and basophils but not neutrophils or eosinophils. Plays an important role in mediating peripheral nerve injury-induced neuropathic pain. Increases NMDA-mediated synaptic transmission in both dopamine D1 and D2 receptor-containing neurons, which may be caused by MAPK/ERK-dependent phosphorylation of GRIN2B/NMDAR2B. The protein is C-C motif chemokine 2 (Ccl2) of Mus musculus (Mouse).